Here is a 142-residue protein sequence, read N- to C-terminus: Transcriptional regulator MraZ (142 aa).

SpoVT-AbrB domains lie at 5 to 51 (ASAL…PRPE) and 77 to 120 (AADV…DAAT).

The protein belongs to the MraZ family. In terms of assembly, forms oligomers.

It localises to the cytoplasm. The protein resides in the nucleoid. This is Transcriptional regulator MraZ from Ralstonia nicotianae (strain ATCC BAA-1114 / GMI1000) (Ralstonia solanacearum).